We begin with the raw amino-acid sequence, 234 residues long: Sugar fermentation stimulation protein A (234 aa).

Positions 201–220 (LLSEAQQRGVEILAYKAEIS) form a DNA-binding region, H-T-H motif.

This sequence belongs to the SfsA family.

Its function is as follows. Binds to DNA non-specifically. Could be a regulatory factor involved in maltose metabolism. This Shigella dysenteriae serotype 1 (strain Sd197) protein is Sugar fermentation stimulation protein A.